The chain runs to 267 residues: L-aspartate dehydrogenase (267 aa).

Residues Ala-124 and Asn-190 each coordinate NAD(+). Residue His-218 is part of the active site.

The protein belongs to the L-aspartate dehydrogenase family.

It carries out the reaction L-aspartate + NADP(+) + H2O = oxaloacetate + NH4(+) + NADPH + H(+). The enzyme catalyses L-aspartate + NAD(+) + H2O = oxaloacetate + NH4(+) + NADH + H(+). Its pathway is cofactor biosynthesis; NAD(+) biosynthesis; iminoaspartate from L-aspartate (dehydrogenase route): step 1/1. In terms of biological role, specifically catalyzes the NAD or NADP-dependent dehydrogenation of L-aspartate to iminoaspartate. This Methanococcus maripaludis (strain C6 / ATCC BAA-1332) protein is L-aspartate dehydrogenase.